The primary structure comprises 623 residues: Chaperone protein DnaK (623 aa).

Position 197 is a phosphothreonine; by autocatalysis (threonine 197). Basic and acidic residues predominate over residues 595 to 615; the sequence is AENMYKKDEPNTANDKKKKDD. The disordered stretch occupies residues 595–623; the sequence is AENMYKKDEPNTANDKKKKDDDVIDAEVE.

It belongs to the heat shock protein 70 family.

Its function is as follows. Acts as a chaperone. This is Chaperone protein DnaK from Campylobacter jejuni subsp. jejuni serotype O:6 (strain 81116 / NCTC 11828).